A 212-amino-acid polypeptide reads, in one-letter code: Large ribosomal subunit protein uL3 (212 aa).

A compositionally biased stretch (polar residues) spans 136-155 (THGNSLSHRSNGSIGQNQTP). The tract at residues 136-157 (THGNSLSHRSNGSIGQNQTPGR) is disordered. Position 153 is an N5-methylglutamine (Gln153).

This sequence belongs to the universal ribosomal protein uL3 family. Part of the 50S ribosomal subunit. Forms a cluster with proteins L14 and L19. Post-translationally, methylated by PrmB.

One of the primary rRNA binding proteins, it binds directly near the 3'-end of the 23S rRNA, where it nucleates assembly of the 50S subunit. This is Large ribosomal subunit protein uL3 from Shewanella putrefaciens (strain CN-32 / ATCC BAA-453).